Reading from the N-terminus, the 96-residue chain is Protein RnfH (96 aa).

Belongs to the UPF0125 (RnfH) family.

This is Protein RnfH from Escherichia coli O139:H28 (strain E24377A / ETEC).